The chain runs to 135 residues: Ribonuclease P protein component 2 (135 aa).

It belongs to the eukaryotic/archaeal RNase P protein component 2 family. In terms of assembly, consists of a catalytic RNA component and at least 4-5 protein subunits.

The protein resides in the cytoplasm. The enzyme catalyses Endonucleolytic cleavage of RNA, removing 5'-extranucleotides from tRNA precursor.. In terms of biological role, part of ribonuclease P, a protein complex that generates mature tRNA molecules by cleaving their 5'-ends. The polypeptide is Ribonuclease P protein component 2 (Methanococcus aeolicus (strain ATCC BAA-1280 / DSM 17508 / OCM 812 / Nankai-3)).